Consider the following 1170-residue polypeptide: Thrombospondin-1 (1170 aa).

The signal sequence occupies residues 1-18 (MGLAWGLGVLFLMHVCGT). The heparin-binding stretch occupies residues 47-95 (RLVKGPDPSSPAFRIEDANLIPPVPDDKFQDLVDAVRAEKGFLLLASLR). Residues 65–270 (NLIPPVPDDK…HKTKDLQAIC (206 aa)) enclose the Laminin G-like domain. A disulfide bridge connects residues cysteine 171 and cysteine 232. Residues asparagine 248 and asparagine 360 are each glycosylated (N-linked (GlcNAc...) asparagine). The region spanning 316-373 (PLCYHNGVQYRNNEEWTVDSCTECHCQNSVTICKKVSCPIMPCSNATVPDGECCPRCW) is the VWFC domain. 3 TSP type-1 domains span residues 379–429 (DDGW…QECD), 435–490 (DGGW…DACP), and 492–547 (NGGW…QDCP). A C-linked (Man) tryptophan glycan is attached at tryptophan 385. Cystine bridges form between cysteine 391-cysteine 423, cysteine 395-cysteine 428, and cysteine 406-cysteine 413. O-linked (Fuc...) serine glycosylation is present at serine 394. Tryptophan 438 and tryptophan 441 each carry a C-linked (Man) tryptophan glycan. Cystine bridges form between cysteine 447/cysteine 484, cysteine 451/cysteine 489, and cysteine 462/cysteine 474. Threonine 450 carries an O-linked (Fuc...) threonine glycan. C-linked (Man) tryptophan glycosylation occurs at tryptophan 498. 21 disulfides stabilise this stretch: cysteine 504/cysteine 541, cysteine 508/cysteine 546, cysteine 519/cysteine 531, cysteine 551/cysteine 562, cysteine 556/cysteine 572, cysteine 575/cysteine 586, cysteine 592/cysteine 608, cysteine 599/cysteine 617, cysteine 620/cysteine 644, cysteine 650/cysteine 663, cysteine 657/cysteine 676, cysteine 678/cysteine 689, cysteine 705/cysteine 713, cysteine 718/cysteine 738, cysteine 754/cysteine 774, cysteine 777/cysteine 797, cysteine 813/cysteine 833, cysteine 836/cysteine 856, cysteine 874/cysteine 894, cysteine 910/cysteine 930, and cysteine 946/cysteine 1167. An O-linked (Fuc...) threonine glycan is attached at threonine 507. Residues 531-1152 (CVGDVTENQI…YAGGRLGLFV (622 aa)) are involved in retention in extracellular matrix (ECM); involved in trimer formation. Residues 547–587 (PIDGCLSNPCFAGVKCTSYPDGSWKCGACPPGYSGNGIQCT) form the EGF-like 1 domain. A glycan (O-linked (Xyl) serine) is linked at serine 553. In terms of domain architecture, EGF-like 2 spans 646–690 (PRNPCTDGTHDCNKNAKCNYLGHYSDPMYRCECKPGYAGNGIICG). TSP type-3 repeat units follow at residues 691–726 (EDTD…NSGQ), 727–762 (EDYD…NPAQ), 763–785 (YDYD…NPDQ), 786–821 (ADTD…NVDQ), 822–844 (RDTD…NPDQ), 845–882 (LDSD…NANQ), 883–918 (ADHD…NPDQ), and 919–954 (KDSD…DISE). A glycan (N-linked (GlcNAc...) asparagine) is linked at asparagine 708. The tract at residues 839–934 (EHNPDQLDSD…GRGDACKDDF (96 aa)) is disordered. 3 stretches are compositionally biased toward basic and acidic residues: residues 840–854 (HNPD…RIGD), 883–894 (ADHDKDGKGDAC), and 917–934 (DQKD…KDDF). Residues 926–928 (RGD) carry the Cell attachment site motif. The 213-residue stretch at 958-1170 (RRFQMIPLDP…SDLKYECRDP (213 aa)) folds into the TSP C-terminal domain. A glycan (N-linked (GlcNAc...) asparagine) is linked at asparagine 1067.

Belongs to the thrombospondin family. As to quaternary structure, homotrimer; disulfide-linked. Can bind to fibrinogen, fibronectin, laminin, type V collagen and integrins alpha-V/beta-1, alpha-V/beta-3 and alpha-IIb/beta-3. Binds heparin. Interacts (via the C-terminal domain) with CD47. Interacts (via the TSP type I repeats) with CD36; the interaction conveys an antiangiogenic effect. Interacts (via the TSP type I repeats) with HRG; the interaction blocks the antiangiogenic effect of THBS1 with CD36. Interacts with ATF6 (via lumenal domain). Interacts with FN1; this interaction is enhanced by TNFAIP6, which may act as a bridging molecule between FN1 and THBS1. Interacts with SIRPA; the interaction stimulates phosphorylation of SIRPA. As to expression, expressed by platelets (at protein level). Expressed by monocyte-derived immature and mature dendritic cells (at protein level).

The protein resides in the secreted. Its subcellular location is the cell surface. The protein localises to the extracellular space. It localises to the extracellular matrix. It is found in the endoplasmic reticulum. The protein resides in the sarcoplasmic reticulum. Adhesive glycoprotein that mediates cell-to-cell and cell-to-matrix interactions. Multifunctional, involved in inflammation, angiogenesis, wound healing, reactive oxygen species (ROS) signaling, nitrous oxide (NO) signaling, apoptosis, senescence, aging, cellular self-renewal, stemness, and cardiovascular and metabolic homeostasis. Negatively modulates dendritic cell activation and cytokine release, as part of an autocrine feedback loop, contributing to the resolution of inflammation and immune homeostasis. Ligand for receptor CD47. Modulates nitrous oxide (NO) signaling via CD47, hence playing a role as a pressor agent, supporting blood pressure. Plays a role in endothelial cell senescence, acting via CD47, by increasing the abundance and activation of NADPH oxidase NOX1, and so generating excess ROS. Inhibits stem cell self-renewal, acting via CD47 signaling, probably by regulation of the stem cell transcription factors POU5F1/OCT4, SOX2, MYC/c-Myc and KLF4. Negatively modulates wound healing, acting via CD47. Ligand for receptor CD36. Involved in inducing apoptosis in podocytes in response to elevated free fatty acids, acting via CD36. Plays a role in suppressing angiogenesis, acting, depending on context, via CD36 or CD47. Promotes cellular senescence in a TP53-CDKN1A-RB1 signaling-dependent manner. Ligand for immunoglobulin-like cell surface receptor SIRPA. Involved in ROS signaling in non-phagocytic cells, stimulating NADPH oxidase-derived ROS production, acting via interaction with SIRPA. Plays a role in metabolic dysfunction in diet-induced obesity, perhaps acting by exacerbating adipose inflammatory activity; its effects may be mediated, at least in part, through enhanced adipocyte proliferation. Plays a role in ER stress response, via its interaction with the activating transcription factor 6 alpha (ATF6) which produces adaptive ER stress response factors. May be involved in age-related conditions, including metabolic dysregulation, during normal aging. This chain is Thrombospondin-1, found in Homo sapiens (Human).